Reading from the N-terminus, the 147-residue chain is MVEWTATERTHIEAIWSKIDIDVCGPLALQRCLIVYPWTQRYFGSFGDLSTDAAIVGNPKVANHGVVALTGLRTALDHMDDIKATYATLSVLHSEKLHVDPDNFRLLCDCLTIVVAGKFGPTLRPEMQAAWQKYLSAVVSALGRQYH.

A Globin domain is found at 3–147 (EWTATERTHI…VVSALGRQYH (145 aa)). Residues His-64 and His-93 each coordinate heme b.

This sequence belongs to the globin family. Hb 1 is a heterotetramer of two alpha-1 and two beta-1 chains. Hb 2 is a heterotetramer of two alpha-2 and two beta-1 chains. As to expression, red blood cells.

Its function is as follows. Involved in oxygen transport from gills to the various peripheral tissues. This Boreogadus saida (Polar cod) protein is Hemoglobin subunit beta-1 (hbb1).